The sequence spans 150 residues: Cytochrome c oxidase subunit 5A, mitochondrial (150 aa).

The transit peptide at 1-41 (MLGAALRRCAVAAAARAGPRGLLHSAPTPGPAAAIQSVRCY) directs the protein to the mitochondrion. Positions 2 to 17 (LGAALRRCAVAAAARA) match the SIFI-degron motif. Residues Lys87 and Lys113 each carry the N6-acetyllysine modification. Thr141 bears the Phosphothreonine mark.

It belongs to the cytochrome c oxidase subunit 5A family. In terms of assembly, component of the cytochrome c oxidase (complex IV, CIV), a multisubunit enzyme composed of 14 subunits. The complex is composed of a catalytic core of 3 subunits MT-CO1, MT-CO2 and MT-CO3, encoded in the mitochondrial DNA, and 11 supernumerary subunits COX4I, COX5A, COX5B, COX6A, COX6B, COX6C, COX7A, COX7B, COX7C, COX8 and NDUFA4, which are encoded in the nuclear genome. The complex exists as a monomer or a dimer and forms supercomplexes (SCs) in the inner mitochondrial membrane with NADH-ubiquinone oxidoreductase (complex I, CI) and ubiquinol-cytochrome c oxidoreductase (cytochrome b-c1 complex, complex III, CIII), resulting in different assemblies (supercomplex SCI(1)III(2)IV(1) and megacomplex MCI(2)III(2)IV(2)). Interacts with AFG1L. Interacts with RAB5IF. In response to mitochondrial stress, the precursor protein is ubiquitinated by the SIFI complex in the cytoplasm before mitochondrial import, leading to its degradation. Within the SIFI complex, UBR4 initiates ubiquitin chain that are further elongated or branched by KCMF1.

Its subcellular location is the mitochondrion inner membrane. The protein operates within energy metabolism; oxidative phosphorylation. Its function is as follows. Component of the cytochrome c oxidase, the last enzyme in the mitochondrial electron transport chain which drives oxidative phosphorylation. The respiratory chain contains 3 multisubunit complexes succinate dehydrogenase (complex II, CII), ubiquinol-cytochrome c oxidoreductase (cytochrome b-c1 complex, complex III, CIII) and cytochrome c oxidase (complex IV, CIV), that cooperate to transfer electrons derived from NADH and succinate to molecular oxygen, creating an electrochemical gradient over the inner membrane that drives transmembrane transport and the ATP synthase. Cytochrome c oxidase is the component of the respiratory chain that catalyzes the reduction of oxygen to water. Electrons originating from reduced cytochrome c in the intermembrane space (IMS) are transferred via the dinuclear copper A center (CU(A)) of subunit 2 and heme A of subunit 1 to the active site in subunit 1, a binuclear center (BNC) formed by heme A3 and copper B (CU(B)). The BNC reduces molecular oxygen to 2 water molecules using 4 electrons from cytochrome c in the IMS and 4 protons from the mitochondrial matrix. This chain is Cytochrome c oxidase subunit 5A, mitochondrial (COX5A), found in Plecturocebus donacophilus (Bolivian gray titi monkey).